The sequence spans 370 residues: Phosphate acyltransferase (370 aa).

The protein belongs to the PlsX family. As to quaternary structure, homodimer. Probably interacts with PlsY.

Its subcellular location is the cytoplasm. It carries out the reaction a fatty acyl-[ACP] + phosphate = an acyl phosphate + holo-[ACP]. Its pathway is lipid metabolism; phospholipid metabolism. Its function is as follows. Catalyzes the reversible formation of acyl-phosphate (acyl-PO(4)) from acyl-[acyl-carrier-protein] (acyl-ACP). This enzyme utilizes acyl-ACP as fatty acyl donor, but not acyl-CoA. The chain is Phosphate acyltransferase from Paracoccus denitrificans (strain Pd 1222).